The chain runs to 376 residues: Probable ribonucleoside-diphosphate reductase small subunit 048L (376 aa).

The Fe cation site is built by Asp-110, Glu-140, and His-143. Tyr-147 is an active-site residue. The Fe cation site is built by Glu-217, Glu-251, and His-254.

It belongs to the ribonucleoside diphosphate reductase small chain family. In terms of assembly, heterotetramer composed of a homodimer of the large subunit (R1) and a homodimer of the small subunit (R2). Larger multisubunit protein complex are also active, composed of (R1)n(R2)n. Fe cation is required as a cofactor.

It carries out the reaction a 2'-deoxyribonucleoside 5'-diphosphate + [thioredoxin]-disulfide + H2O = a ribonucleoside 5'-diphosphate + [thioredoxin]-dithiol. Its function is as follows. Ribonucleoside-diphosphate reductase holoenzyme provides the precursors necessary for viral DNA synthesis. Allows virus growth in non-dividing cells. Catalyzes the biosynthesis of deoxyribonucleotides from the corresponding ribonucleotides. This is Probable ribonucleoside-diphosphate reductase small subunit 048L from Invertebrate iridescent virus 3 (IIV-3).